Reading from the N-terminus, the 113-residue chain is Large ribosomal subunit protein uL24 (113 aa).

It belongs to the universal ribosomal protein uL24 family. In terms of assembly, part of the 50S ribosomal subunit.

Its function is as follows. One of two assembly initiator proteins, it binds directly to the 5'-end of the 23S rRNA, where it nucleates assembly of the 50S subunit. Functionally, one of the proteins that surrounds the polypeptide exit tunnel on the outside of the subunit. The protein is Large ribosomal subunit protein uL24 (rplX) of Fusobacterium nucleatum subsp. nucleatum (strain ATCC 25586 / DSM 15643 / BCRC 10681 / CIP 101130 / JCM 8532 / KCTC 2640 / LMG 13131 / VPI 4355).